Consider the following 200-residue polypeptide: MVKIVLASGSPRRSELLKQIGLDFEIVLSDIDESNEENLKANELVQHLAYKKAYDVAKKVANRENGKERYLVVGADTVVVKDRIMGKPKDRDDAVRMLKHLSGSWHEVMTGIALIDTKDFRSVTSVEITKVKMKELTDDTILAYVDTKEPMDKAGAYGIQEKGAILVERIEGCYFNVVGLPLGRLSDLLKDFGVSVLKKI.

Aspartate 76 serves as the catalytic Proton acceptor.

It belongs to the Maf family. YhdE subfamily. The cofactor is a divalent metal cation.

The protein localises to the cytoplasm. The catalysed reaction is dTTP + H2O = dTMP + diphosphate + H(+). It carries out the reaction UTP + H2O = UMP + diphosphate + H(+). Functionally, nucleoside triphosphate pyrophosphatase that hydrolyzes dTTP and UTP. May have a dual role in cell division arrest and in preventing the incorporation of modified nucleotides into cellular nucleic acids. In Acetivibrio thermocellus (strain ATCC 27405 / DSM 1237 / JCM 9322 / NBRC 103400 / NCIMB 10682 / NRRL B-4536 / VPI 7372) (Clostridium thermocellum), this protein is dTTP/UTP pyrophosphatase.